Reading from the N-terminus, the 192-residue chain is MGSAVLLRDDFDGAALRQLARQTKDANQARRLLALAAIYDGGPRSDAARIGSVTLQIVRDWVLRFNARGPDGLVNGKAPGGRAKLNAAQRQALAKVVESGPIPAIHGVVRWRRKDLVQWIFQEFRISMDETTVGRELKALGFAKLSARPRHYAQNELEVDAFKKTSPPLWRKSEAGSRKARTSNSGGPTKRA.

The disordered stretch occupies residues 168–192 (PLWRKSEAGSRKARTSNSGGPTKRA). The segment covering 182 to 192 (TSNSGGPTKRA) has biased composition (polar residues).

The protein to A.xylinum IS1268 ORFA.

This is an uncharacterized protein from Sinorhizobium fredii (strain NBRC 101917 / NGR234).